A 73-amino-acid chain; its full sequence is Putative membrane protein insertion efficiency factor (73 aa).

The protein belongs to the UPF0161 family.

It localises to the cell inner membrane. Functionally, could be involved in insertion of integral membrane proteins into the membrane. This is Putative membrane protein insertion efficiency factor from Neisseria meningitidis serogroup C / serotype 2a (strain ATCC 700532 / DSM 15464 / FAM18).